A 386-amino-acid chain; its full sequence is MSKVENKTKKLRVFEAFAGIGAQRKALEKVRKDEYEIVGLAEWYVPAIVMYQAIHNNFHTKLEYKSVSREEMIDYLENKTLSWNSKNPVSNGYWKRKKDDELKIIYNAIKLSEKEGNIFDIRDLYKRTLKNIDLLTYSFPCQDLSQQGIQKGMKRGSGTRSGLLWEIERALDSTEKNDLPKYLLMENVGALLHKKNEEELNQWKQKLESLGYQNSIEVLNAADFGSSQARRRVFMISTLNEFVELPKGDKKPKSIKKVLNKIVSEKDILNNLLKYNLTEFKKTKSNINKASLIGYSKFNSEGYVYDPEFTGPTLTASGANSRIKIKDGSNIRKMNSDETFLYIGFDSQDGKRVNEIEFLTENQKIFVCGNSISVEVLEAIIDKIGG.

The 376-residue stretch at 11–386 (LRVFEAFAGI…LEAIIDKIGG (376 aa)) folds into the SAM-dependent MTase C5-type domain. The active site involves cysteine 141.

Belongs to the class I-like SAM-binding methyltransferase superfamily. C5-methyltransferase family.

The enzyme catalyses a 2'-deoxycytidine in DNA + S-adenosyl-L-methionine = a 5-methyl-2'-deoxycytidine in DNA + S-adenosyl-L-homocysteine + H(+). This de novo methylase acts completely and exclusively on CG residues in DNA; methylates unmethylated and hemi-methylated DNA. In Spiroplasma monobiae (strain ATCC 33825 / MQ-1), this protein is Orphan methyltransferase M.SssI (sssIM).